A 111-amino-acid chain; its full sequence is Large ribosomal subunit protein uL22 (111 aa).

It belongs to the universal ribosomal protein uL22 family. As to quaternary structure, part of the 50S ribosomal subunit.

This protein binds specifically to 23S rRNA; its binding is stimulated by other ribosomal proteins, e.g. L4, L17, and L20. It is important during the early stages of 50S assembly. It makes multiple contacts with different domains of the 23S rRNA in the assembled 50S subunit and ribosome. Its function is as follows. The globular domain of the protein is located near the polypeptide exit tunnel on the outside of the subunit, while an extended beta-hairpin is found that lines the wall of the exit tunnel in the center of the 70S ribosome. The protein is Large ribosomal subunit protein uL22 of Mycoplasma mycoides subsp. mycoides SC (strain CCUG 32753 / NCTC 10114 / PG1).